The primary structure comprises 217 residues: Somatotropin (217 aa).

The N-terminal stretch at 1 to 27 (MMAAGPRASLLLAFALLCLPWTQEVGA) is a signal peptide. His46 provides a ligand contact to Zn(2+). A disulfide bond links Cys79 and Cys190. Ser132 carries the post-translational modification Phosphoserine. Residue Glu199 participates in Zn(2+) binding. Cys207 and Cys215 are oxidised to a cystine.

Belongs to the somatotropin/prolactin family.

It localises to the secreted. In terms of biological role, plays an important role in growth control. Its major role in stimulating body growth is to stimulate the liver and other tissues to secrete IGF1. It stimulates both the differentiation and proliferation of myoblasts. It also stimulates amino acid uptake and protein synthesis in muscle and other tissues. The protein is Somatotropin (GH1) of Cervus elaphus (Red deer).